We begin with the raw amino-acid sequence, 290 residues long: TIMELESS-interacting protein (290 aa).

Residues 1–59 form a disordered region; that stretch reads MLEPQENGLTDLPDYEHIEDETFPPFPPPASPGREDGEGAEPEEESGRGAPVPVPPKRT. Residues 67–143 form an interaction with TIMELESS region; sequence LNAERLISER…KEVQTCLKRI (77 aa). Phosphoserine is present on residues Ser194 and Ser222. Over residues 221–242 the composition is skewed to polar residues; it reads NSQSLGNDLSVNTPSTQTSEAG. The segment at 221–290 is disordered; it reads NSQSLGNDLS…VEETQLDQSF (70 aa). 2 positions are modified to phosphothreonine: Thr233 and Thr244.

Belongs to the CSM3 family. Interacts with TIMELESS (via N-terminus), which impairs TIMELESS self-association. Associates with the MCM2-7 complex. Interacts with RPA2, PRDX2.

Its subcellular location is the cytoplasm. The protein resides in the nucleus. Its function is as follows. Plays an important role in the control of DNA replication and the maintenance of replication fork stability. Important for cell survival after DNA damage or replication stress. May be specifically required for the ATR-CHEK1 pathway in the replication checkpoint induced by hydroxyurea or ultraviolet light. Forms a complex with TIMELESS and this complex regulates DNA replication processes under both normal and stress conditions, stabilizes replication forks and influences both CHEK1 phosphorylation and the intra-S phase checkpoint in response to genotoxic stress. This chain is TIMELESS-interacting protein (TIPIN), found in Bos taurus (Bovine).